The chain runs to 351 residues: MIKTLVVDDSALMRRAIRDMLESADDIEVIGTAKNGKEAVENTNKLKPEVIVMDVNMPIMDGLAAVKAIMKTTPIPIIMFSSLTKKGSIEALEALRLGAIDFITKPSGLQEISKIENELVTKVRNLYNSNVNIIRLLNLKKFKGEVINGNWNCPDQNLGILIGSSTGGPSSLEQIIPRLPGDLPASVFIVQHMPEGNFCSQLAARLDAISELEVKEAENNEKVKIGVAYIAPGGYHMEIRKALDVTRIKIIKGKPMHAVMPSVDVTVESFVKVYGNNSVAIILTGMGVDGASGFKKINESNGATIACSEDTCVVFGMPKAAIEAGAIDVVKPIFEIPEQIVRMIEVKCNGN.

A Response regulatory domain is found at 3–120 (KTLVVDDSAL…EISKIENELV (118 aa)). Residue Asp54 is modified to 4-aspartylphosphate. The CheB-type methylesterase domain maps to 160 to 347 (ILIGSSTGGP…EQIVRMIEVK (188 aa)). Catalysis depends on residues Ser165, His192, and Asp289.

The protein belongs to the CheB family. In terms of processing, phosphorylated by CheA. Phosphorylation of the N-terminal regulatory domain activates the methylesterase activity.

The protein resides in the cytoplasm. It catalyses the reaction [protein]-L-glutamate 5-O-methyl ester + H2O = L-glutamyl-[protein] + methanol + H(+). The enzyme catalyses L-glutaminyl-[protein] + H2O = L-glutamyl-[protein] + NH4(+). In terms of biological role, involved in chemotaxis. Part of a chemotaxis signal transduction system that modulates chemotaxis in response to various stimuli. Catalyzes the demethylation of specific methylglutamate residues introduced into the chemoreceptors (methyl-accepting chemotaxis proteins or MCP) by CheR. Also mediates the irreversible deamidation of specific glutamine residues to glutamic acid. This is Protein-glutamate methylesterase/protein-glutamine glutaminase from Methanococcoides burtonii (strain DSM 6242 / NBRC 107633 / OCM 468 / ACE-M).